The chain runs to 88 residues: uncharacterized protein (88 aa).

A signal peptide spans M1–A24.

The protein to Rhizobium NGR234A y4oL.

This is an uncharacterized protein from Sinorhizobium fredii (strain NBRC 101917 / NGR234).